The primary structure comprises 223 residues: N-terminal Xaa-Pro-Lys N-methyltransferase 1 (223 aa).

Residue methionine 1 is modified to N-acetylmethionine. Threonine 2 is subject to N-acetylthreonine; in N-terminal Xaa-Pro-Lys N-methyltransferase 1, N-terminally processed. S-adenosyl-L-methionine-binding positions include glycine 69, arginine 74, 91-93, 119-120, and glutamine 135; these read DVT and LQ.

The protein belongs to the methyltransferase superfamily. NTM1 family.

The protein resides in the nucleus. The enzyme catalyses N-terminal L-alanyl-L-prolyl-L-lysyl-[protein] + 3 S-adenosyl-L-methionine = N-terminal N,N,N-trimethyl-L-alanyl-L-prolyl-L-lysyl-[protein] + 3 S-adenosyl-L-homocysteine + 3 H(+). It catalyses the reaction N-terminal L-seryl-L-prolyl-L-lysyl-[protein] + 3 S-adenosyl-L-methionine = N-terminal N,N,N-trimethyl-L-seryl-L-prolyl-L-lysyl-[protein] + 3 S-adenosyl-L-homocysteine + 3 H(+). The catalysed reaction is N-terminal L-prolyl-L-prolyl-L-lysyl-[protein] + 2 S-adenosyl-L-methionine = N-terminal N,N-dimethyl-L-prolyl-L-prolyl-L-lysyl-[protein] + 2 S-adenosyl-L-homocysteine + 2 H(+). In terms of biological role, distributive alpha-N-methyltransferase that methylates the N-terminus of target proteins containing the N-terminal motif [Ala/Gly/Pro/Ser]-Pro-Lys when the initiator Met is cleaved. Specifically catalyzes mono-, di- or tri-methylation of the exposed alpha-amino group of the Ala, Gly or Ser residue in the [Ala/Gly/Ser]-Pro-Lys motif and mono- or di-methylation of Pro in the Pro-Pro-Lys motif. Some of the substrates may be primed by NTMT2-mediated monomethylation. Catalyzes the trimethylation of the N-terminal Gly in CENPA (after removal of Met-1). Responsible for the N-terminal methylation of KLHL31, MYL2, MYL3, RB1, RCC1, RPL23A and SET. Required during mitosis for normal bipolar spindle formation and chromosome segregation via its action on RCC1. This Mus musculus (Mouse) protein is N-terminal Xaa-Pro-Lys N-methyltransferase 1 (Ntmt1).